A 441-amino-acid chain; its full sequence is Transcriptional regulatory protein ZraR (441 aa).

The region spanning 7–121 is the Response regulatory domain; sequence DILVVDDDVS…RLQETLEKAL (115 aa). Asp56 carries the 4-aspartylphosphate modification. Residues 141–370 form the Sigma-54 factor interaction domain; the sequence is MIGSSPAMQH…LENAIERAVV (230 aa). ATP contacts are provided by Gly172, Thr173, Arg329, and Arg359. A DNA-binding region (H-T-H motif) is located at residues 421–440; sequence KTEAARQLGITRKTLLAKLS.

As to quaternary structure, forms homohexamers in the crystal structure. However, the dimerization interface between DNA-binding domains observed in the crystal structure suggests that dodecamers, rather than hexamers, might be the functionally important oligomer. Phosphorylated by ZraS.

Its subcellular location is the cytoplasm. With respect to regulation, activity of the ZraS/ZraR two-component system is repressed by the zinc-bound form of ZraP, which probably interacts with the periplasmic region of ZraS. Its function is as follows. Part of the Zra signaling pathway, an envelope stress response (ESR) system composed of the periplasmic accessory protein ZraP, the histidine kinase ZraS and the transcriptional regulator ZraR. The ZraPSR system contributes to antibiotic resistance and is important for membrane integrity in the presence of membrane-targeting biocides. ZraR is a member of the two-component regulatory system ZraS/ZraR. When activated by ZraS, acts in conjunction with sigma-54 to regulate the expression of zraP in the presence of high Zn(2+) or Pb(2+) concentrations. Also positively autoregulates the expression of the zraSR operon. The protein is Transcriptional regulatory protein ZraR of Salmonella typhimurium (strain LT2 / SGSC1412 / ATCC 700720).